The sequence spans 336 residues: tRNA(Ile)-lysidine synthase (336 aa).

An ATP-binding site is contributed by 40–45 (SGGQDS).

It belongs to the tRNA(Ile)-lysidine synthase family.

The protein localises to the cytoplasm. It carries out the reaction cytidine(34) in tRNA(Ile2) + L-lysine + ATP = lysidine(34) in tRNA(Ile2) + AMP + diphosphate + H(+). Its function is as follows. Ligates lysine onto the cytidine present at position 34 of the AUA codon-specific tRNA(Ile) that contains the anticodon CAU, in an ATP-dependent manner. Cytidine is converted to lysidine, thus changing the amino acid specificity of the tRNA from methionine to isoleucine. The sequence is that of tRNA(Ile)-lysidine synthase from Prochlorococcus marinus (strain SARG / CCMP1375 / SS120).